Here is a 234-residue protein sequence, read N- to C-terminus: Ribosomal RNA large subunit methyltransferase E (234 aa).

Residues 1-37 (MSDDDRRRWKGPGPERQDSGRRSTERKVIARNARTES) form a disordered region. Gly-91, Trp-93, Asp-109, Asp-125, and Asp-149 together coordinate S-adenosyl-L-methionine. Catalysis depends on Lys-189, which acts as the Proton acceptor.

The protein belongs to the class I-like SAM-binding methyltransferase superfamily. RNA methyltransferase RlmE family.

The protein localises to the cytoplasm. The catalysed reaction is uridine(2552) in 23S rRNA + S-adenosyl-L-methionine = 2'-O-methyluridine(2552) in 23S rRNA + S-adenosyl-L-homocysteine + H(+). Its function is as follows. Specifically methylates the uridine in position 2552 of 23S rRNA at the 2'-O position of the ribose in the fully assembled 50S ribosomal subunit. This Hyphomonas neptunium (strain ATCC 15444) protein is Ribosomal RNA large subunit methyltransferase E.